We begin with the raw amino-acid sequence, 472 residues long: Zinc finger CCCH domain-containing protein 59 (472 aa).

Positions 87-139 are disordered; that stretch reads YKSPEGNRPRQNAANGSAKPQVIGTGHRVSNQPRKNAVYGPRSSSLSDTRGCG. A C3H1-type zinc finger spans residues 145 to 172; it reads SPKKSVCNFWKDGNCKKGEKCQFLHSWS. WD repeat units follow at residues 185–226, 261–301, 310–347, 350–387, and 436–472; these read GHKN…RSIN, HLEG…SDPF, HHSGEVTCFVVGGEVLYSGSVDKTIKVWDLNTLQCRMT, QHIGTVTSLLCWDKCLISSSLDGTIKLWACSENESLKV, and FSTQTICTLTIGPGGLLFSGDKSGNLRVWSLASGTKV.

The protein is Zinc finger CCCH domain-containing protein 59 (ZFWD3) of Arabidopsis thaliana (Mouse-ear cress).